The following is a 191-amino-acid chain: CASP-like protein 4C3 (191 aa).

The Cytoplasmic segment spans residues 1 to 29 (METGDSAVKSSQDVHYYGKSTAQKHRRSN). The helical transmembrane segment at 30–50 (GIILIFRALTFSFSLTSVIVM) threads the bilayer. At 51 to 72 (GTNRHRIDAQSRVAWYDFDPFR) the chain is on the extracellular side. The chain crosses the membrane as a helical span at residues 73–93 (YVLAVNAIICIYSFVEIWLAV). At 94 to 116 (YTYLKDTLFLPETFQVWFDYGHD) the chain is on the cytoplasmic side. The chain crosses the membrane as a helical span at residues 117 to 137 (QGFAYLLFSANSAGIAMAQLL). The Extracellular portion of the chain corresponds to 138–162 (QSGNSLIHGAYRCSDAGVFCTQARA). Residues 163–183 (SIGLGFGAFLFLALSSLLTGL) form a helical membrane-spanning segment. Over 184 to 191 (RVARWYFS) the chain is Cytoplasmic.

It belongs to the Casparian strip membrane proteins (CASP) family. As to quaternary structure, homodimer and heterodimers.

The protein localises to the cell membrane. This is CASP-like protein 4C3 from Physcomitrium patens (Spreading-leaved earth moss).